Here is a 338-residue protein sequence, read N- to C-terminus: tRNA N6-adenosine threonylcarbamoyltransferase (338 aa).

Residues histidine 111 and histidine 115 each contribute to the Fe cation site. Residues 134–138, aspartate 167, glycine 180, and asparagine 272 contribute to the substrate site; that span reads LVSGG. Aspartate 300 provides a ligand contact to Fe cation.

It belongs to the KAE1 / TsaD family. Requires Fe(2+) as cofactor.

Its subcellular location is the cytoplasm. The catalysed reaction is L-threonylcarbamoyladenylate + adenosine(37) in tRNA = N(6)-L-threonylcarbamoyladenosine(37) in tRNA + AMP + H(+). Functionally, required for the formation of a threonylcarbamoyl group on adenosine at position 37 (t(6)A37) in tRNAs that read codons beginning with adenine. Is involved in the transfer of the threonylcarbamoyl moiety of threonylcarbamoyl-AMP (TC-AMP) to the N6 group of A37, together with TsaE and TsaB. TsaD likely plays a direct catalytic role in this reaction. The chain is tRNA N6-adenosine threonylcarbamoyltransferase from Vibrio atlanticus (strain LGP32) (Vibrio splendidus (strain Mel32)).